A 330-amino-acid polypeptide reads, in one-letter code: MRIRYGWELALAALLVIEIVAFGAINPRMLDLNMLLFSTSDFICIGIVALPLTMVIVSGGIDISFGSTIGLCAIALGVLFQSGVPMPLAILLTLLLGALCGLINAGLIIYTKVNPLVITLGTLYLFAGSALLLSGMAGATGYEGIGGFPMAFTDFANLDVLGLPVPLIIFLICLLVFWLWLHKTHAGRNVFLIGQSPRVALYSAIPVNRTLCALYAMTGLASAVAAVLLVSYFGSARSDLGASFLMPAITAVVLGGANIYGGSGSIIGTAIAVLLVGYLQQGLQMAGVPNQVSSALSGALLIVVVVGRSVSLHRQQIKEWLARRANNPLP.

Topologically, residues 1–4 are cytoplasmic; that stretch reads MRIR. The chain crosses the membrane as a helical span at residues 5–25; that stretch reads YGWELALAALLVIEIVAFGAI. Topologically, residues 26-42 are periplasmic; that stretch reads NPRMLDLNMLLFSTSDF. A helical transmembrane segment spans residues 43 to 63; sequence ICIGIVALPLTMVIVSGGIDI. At 64–67 the chain is on the cytoplasmic side; the sequence is SFGS. The next 2 helical transmembrane spans lie at 68 to 88 and 89 to 109; these read TIGL…PMPL and AILL…GLII. Residues 110–115 lie on the Cytoplasmic side of the membrane; it reads YTKVNP. The helical transmembrane segment at 116–136 threads the bilayer; sequence LVITLGTLYLFAGSALLLSGM. At 137–159 the chain is on the periplasmic side; it reads AGATGYEGIGGFPMAFTDFANLD. A helical transmembrane segment spans residues 160-180; the sequence is VLGLPVPLIIFLICLLVFWLW. Residues 181 to 209 are Cytoplasmic-facing; the sequence is LHKTHAGRNVFLIGQSPRVALYSAIPVNR. A helical transmembrane segment spans residues 210 to 230; it reads TLCALYAMTGLASAVAAVLLV. Residues 231–237 lie on the Periplasmic side of the membrane; that stretch reads SYFGSAR. Transmembrane regions (helical) follow at residues 238–258 and 259–279; these read SDLG…GGAN and IYGG…VGYL. The Periplasmic portion of the chain corresponds to 280–285; sequence QQGLQM. A helical transmembrane segment spans residues 286–306; that stretch reads AGVPNQVSSALSGALLIVVVV. Residues 307-330 lie on the Cytoplasmic side of the membrane; sequence GRSVSLHRQQIKEWLARRANNPLP.

The protein belongs to the binding-protein-dependent transport system permease family. AraH/RbsC subfamily. In terms of assembly, the complex is composed of two ATP-binding proteins (LsrA), two transmembrane proteins (LsrC and LsrD) and a solute-binding protein (LsrB).

It is found in the cell inner membrane. In terms of biological role, part of the ABC transporter complex LsrABCD involved in autoinducer 2 (AI-2) import. Probably responsible for the translocation of the substrate across the membrane. The sequence is that of Autoinducer 2 import system permease protein LsrD (lsrD) from Shigella flexneri serotype 5b (strain 8401).